The following is an 805-amino-acid chain: Leucine--tRNA ligase (805 aa).

The 'HIGH' region motif lies at 41 to 52; that stretch reads PYPSGAGLHVGH. A 'KMSKS' region motif is present at residues 577–581; it reads KMSKS. Residue K580 coordinates ATP.

Belongs to the class-I aminoacyl-tRNA synthetase family.

The protein localises to the cytoplasm. The catalysed reaction is tRNA(Leu) + L-leucine + ATP = L-leucyl-tRNA(Leu) + AMP + diphosphate. The protein is Leucine--tRNA ligase of Staphylococcus aureus (strain JH1).